Consider the following 340-residue polypeptide: Glutamyl-tRNA reductase (340 aa).

Substrate contacts are provided by residues 49–52 (TCNR), S108, 113–115 (ETE), and Q119. Residue C50 is the Nucleophile of the active site. Residue 188–193 (GAGEMS) coordinates NADP(+).

Belongs to the glutamyl-tRNA reductase family. In terms of assembly, homodimer.

It catalyses the reaction (S)-4-amino-5-oxopentanoate + tRNA(Glu) + NADP(+) = L-glutamyl-tRNA(Glu) + NADPH + H(+). The protein operates within porphyrin-containing compound metabolism; protoporphyrin-IX biosynthesis; 5-aminolevulinate from L-glutamyl-tRNA(Glu): step 1/2. Catalyzes the NADPH-dependent reduction of glutamyl-tRNA(Glu) to glutamate 1-semialdehyde (GSA). The protein is Glutamyl-tRNA reductase of Akkermansia muciniphila (strain ATCC BAA-835 / DSM 22959 / JCM 33894 / BCRC 81048 / CCUG 64013 / CIP 107961 / Muc).